Here is a 400-residue protein sequence, read N- to C-terminus: Forkhead box protein Q1 (400 aa).

A disordered region spans residues 1–112 (MKLEVFVPRA…EGARSKPYTR (112 aa)). Positions 32–54 (LSAAGDDSLGSDGDCAANSPAAG) are enriched in low complexity. Composition is skewed to gly residues over residues 55–66 (SGAGDLEGGGGE) and 95–104 (CAGGVGGGEG). The fork-head DNA-binding region spans 115–210 (KPPYSYIALI…ADGVFRRRRK (96 aa)). The segment at 213 to 264 (SHRTTVSASGLRPEEAPPGPAGTPQPAPAARSSPIARSPARQEERSSPASKF) is disordered. The span at 228–239 (APPGPAGTPQPA) shows a compositional bias: pro residues. The segment covering 240-251 (PAARSSPIARSP) has biased composition (low complexity).

In terms of tissue distribution, expressed in kidney and stomach. Expression in the outer medulla of the kidney and the transitional epithelium. Expressed in the hair follicle medulla.

The protein localises to the nucleus. In terms of biological role, plays a role in hair follicle differentiation. This is Forkhead box protein Q1 (Foxq1) from Mus musculus (Mouse).